A 372-amino-acid chain; its full sequence is 4-hydroxy-3-methylbut-2-en-1-yl diphosphate synthase (flavodoxin) (372 aa).

Cysteine 270, cysteine 273, cysteine 305, and glutamate 312 together coordinate [4Fe-4S] cluster.

This sequence belongs to the IspG family. It depends on [4Fe-4S] cluster as a cofactor.

The enzyme catalyses (2E)-4-hydroxy-3-methylbut-2-enyl diphosphate + oxidized [flavodoxin] + H2O + 2 H(+) = 2-C-methyl-D-erythritol 2,4-cyclic diphosphate + reduced [flavodoxin]. It functions in the pathway isoprenoid biosynthesis; isopentenyl diphosphate biosynthesis via DXP pathway; isopentenyl diphosphate from 1-deoxy-D-xylulose 5-phosphate: step 5/6. Converts 2C-methyl-D-erythritol 2,4-cyclodiphosphate (ME-2,4cPP) into 1-hydroxy-2-methyl-2-(E)-butenyl 4-diphosphate. This chain is 4-hydroxy-3-methylbut-2-en-1-yl diphosphate synthase (flavodoxin), found in Idiomarina loihiensis (strain ATCC BAA-735 / DSM 15497 / L2-TR).